The following is a 210-amino-acid chain: Small ribosomal subunit protein uS3 (210 aa).

Residues 17–86 enclose the KH type-2 domain; sequence IDEFLEKELR…NPQIDVQEIK (70 aa).

It belongs to the universal ribosomal protein uS3 family. Part of the 30S ribosomal subunit.

Binds the lower part of the 30S subunit head. In Pyrococcus abyssi (strain GE5 / Orsay), this protein is Small ribosomal subunit protein uS3.